The sequence spans 234 residues: HTH-type transcriptional regulator MT1864 (234 aa).

One can recognise an HTH tetR-type domain in the interval 15-75; the sequence is EQIEAKIVEL…LLLVDAYSDL (61 aa). Positions 38–57 form a DNA-binding region, H-T-H motif; sequence SLRAIARNLGMVSSAVYRYV.

Homodimer.

It is found in the cytoplasm. Its function is as follows. May participate in the regulatory network that controls the expression of MmpL lipid transporters. The sequence is that of HTH-type transcriptional regulator MT1864 from Mycobacterium tuberculosis (strain CDC 1551 / Oshkosh).